The primary structure comprises 487 residues: N-succinylglutamate 5-semialdehyde dehydrogenase (487 aa).

221 to 226 (GSSDTG) lines the NAD(+) pocket. Catalysis depends on residues Glu244 and Cys278.

It belongs to the aldehyde dehydrogenase family. AstD subfamily.

The enzyme catalyses N-succinyl-L-glutamate 5-semialdehyde + NAD(+) + H2O = N-succinyl-L-glutamate + NADH + 2 H(+). It functions in the pathway amino-acid degradation; L-arginine degradation via AST pathway; L-glutamate and succinate from L-arginine: step 4/5. Its function is as follows. Catalyzes the NAD-dependent reduction of succinylglutamate semialdehyde into succinylglutamate. This is N-succinylglutamate 5-semialdehyde dehydrogenase from Burkholderia mallei (strain ATCC 23344).